The primary structure comprises 471 residues: F-box only protein 3 (471 aa).

The F-box domain maps to 10-56 (PLTLESLPTDPLLLILSFLDYRDLINCCYVSRRLSQLSSHDPLWRRH). The 131-residue stretch at 278–408 (VATTGDITVS…FHMACPTFRV (131 aa)) folds into the ApaG domain. Residues 419–451 (EYEEMEEEEEEEEEEDEDDDSADMDESDEDDEE) are compositionally biased toward acidic residues. Residues 419–455 (EYEEMEEEEEEEEEEDEDDDSADMDESDEDDEEERRR) are disordered.

Part of a SCF (SKP1-cullin-F-box) protein ligase complex SCF(FBXO3) consisting of FBXO3, SKP1, CUL1 and RBX1. Interacts with PML, interaction is direct and takes place either alone or within the SCF complex. As to quaternary structure, (Microbial infection) Interacts (via ApaG domain) with Rift valley fever virus NSs helical filament; this interaction forms a filamentous E3 which mediates degradation of TFIIH complex through interaction with GT2H1.

Its subcellular location is the nucleus. Its pathway is protein modification; protein ubiquitination. Functionally, substrate recognition component of the SCF (SKP1-CUL1-F-box protein)-type E3 ubiquitin ligase complex, SCF(FBXO3), which mediates the ubiquitination and subsequent proteasomal degradation of target proteins. Mediates the ubiquitination of HIPK2 and probably that of EP300, leading to rapid degradation by the proteasome. In the presence of PML, HIPK2 ubiquitination still occurs, but degradation is prevented. PML, HIPK2 and FBXO3 may act synergically to activate p53/TP53-dependent transactivation. The SCF(FBXO3) also acts as a regulator of inflammation by mediating ubiquitination and degradation of FBXL2 in response to lipopolysaccharide (LPS). The SCF(FBXO3) complex specifically recognizes FBXL2 phosphorylated at 'Thr-404' and promotes its ubiquitination. In terms of biological role, (Microbial infection) Associates with the Rift valley fever virus NSs to form a remodeled E3 ligase that triggers efficient proteasomal degradation of targeted proteins. The filamentous E3 ligase targets the TFIIH complex leading to robust inhibition of antiviral immunity and enhances viral pathogenesis. The chain is F-box only protein 3 from Homo sapiens (Human).